Consider the following 65-residue polypeptide: Small ribosomal subunit protein bS21 (65 aa).

The protein belongs to the bacterial ribosomal protein bS21 family.

This Chlorobaculum parvum (strain DSM 263 / NCIMB 8327) (Chlorobium vibrioforme subsp. thiosulfatophilum) protein is Small ribosomal subunit protein bS21.